Reading from the N-terminus, the 345-residue chain is Annexin A9 (345 aa).

4 Annexin repeats span residues 41-112 (FSVD…ALLQ), 113-184 (PAAQ…ALSK), 197-266 (NLEE…SLAS), and 270-341 (NTAL…ALCR).

It belongs to the annexin family. In terms of assembly, homodimer.

Functionally, may act as a low affinity receptor for acetylcholine. The protein is Annexin A9 (Anxa9) of Mus musculus (Mouse).